A 717-amino-acid chain; its full sequence is DNA polymerase iota (717 aa).

The interval 1–22 (MEPLHAGAAGSSRAVCSQGPPT) is disordered. The 214-residue stretch at 30–243 (IVHVDLDCFY…NHIKEIPGIG (214 aa)) folds into the UmuC domain. Residues aspartate 34 and leucine 35 each coordinate Mg(2+). A 2'-deoxyribonucleoside 5'-triphosphate contacts are provided by tyrosine 39 and arginine 71. Residue aspartate 126 participates in Mg(2+) binding. The Proton acceptor role is filled by glutamate 127. DNA-binding regions lie at residues 300–307 (QSFSEEDT) and 343–360 (RLVI…ESRQ). A Ubiquitin-binding 1 (UBM1) motif is present at residues 500-517 (VDQEVFKQLPADIQEEIL). Disordered stretches follow at residues 549–589 (QMQA…SHPS), 603–622 (KDEQ…FSST), and 644–687 (HRTV…DIDP). Over residues 575 to 589 (PGTSGLSPGSTSHPS) the composition is skewed to low complexity. 2 stretches are compositionally biased toward polar residues: residues 607-622 (TSQG…FSST) and 652-662 (QTATASHQGLE). Basic and acidic residues predominate over residues 665 to 679 (QGLESRELDSAEEKL). Positions 685-702 (IDPQVFYELPEEVQKELM) match the Ubiquitin-binding 2 (UBM2) motif.

This sequence belongs to the DNA polymerase type-Y family. As to quaternary structure, interacts with POLH. Interacts with REV1. Interacts with ubiquitin. Requires Mg(2+) as cofactor. It depends on Mn(2+) as a cofactor. Monoubiquitinated. Protein monoubiquitination prevents POLI binding to ubiquitin via the ubiquitin-binding motif 1 and ubiquitin-binding motif 2. In terms of tissue distribution, detected in testis, and at very low levels in spleen, lung and brain. Detected in round spermatids, but not in prophase spermatocytes.

The protein resides in the nucleus. It carries out the reaction DNA(n) + a 2'-deoxyribonucleoside 5'-triphosphate = DNA(n+1) + diphosphate. Error-prone DNA polymerase specifically involved in DNA repair. Plays an important role in translesion synthesis, where the normal high-fidelity DNA polymerases cannot proceed and DNA synthesis stalls. Favors Hoogsteen base-pairing in the active site. Inserts the correct base with high-fidelity opposite an adenosine template. Exhibits low fidelity and efficiency opposite a thymidine template, where it will preferentially insert guanosine. May play a role in hypermutation of immunoglobulin genes. Forms a Schiff base with 5'-deoxyribose phosphate at abasic sites, but may not have lyase activity. This is DNA polymerase iota (Poli) from Mus musculus (Mouse).